The following is a 337-amino-acid chain: ERI1 exoribonuclease 3 (337 aa).

The Exonuclease domain maps to 146-320; it reads FLVLDFEATC…DDCKNIANIM (175 aa). Residues D150, E152, and D249 each coordinate Mg(2+). Residue E152 is the Proton acceptor of the active site. E152 serves as a coordination point for AMP. Residue H307 is the Proton acceptor of the active site. AMP is bound at residue H307. Residue D312 participates in Mg(2+) binding.

In terms of assembly, interacts with PRNP. The cofactor is Mg(2+). Highly expressed in the brain, heart, thyroid and testis. Expressed at low levels in the muscle cells, liver, pancreas and kidney.

This chain is ERI1 exoribonuclease 3 (Eri3), found in Mus musculus (Mouse).